The primary structure comprises 456 residues: UPF0210 protein Dde_3704 (456 aa).

It belongs to the UPF0210 family. In terms of assembly, homodimer.

The polypeptide is UPF0210 protein Dde_3704 (Oleidesulfovibrio alaskensis (strain ATCC BAA-1058 / DSM 17464 / G20) (Desulfovibrio alaskensis)).